The primary structure comprises 107 residues: Ferredoxin (107 aa).

2 4Fe-4S ferredoxin-type domains span residues 8-37 (ERVV…LDEN) and 38-67 (GKSR…KASE). C17, C20, and C23 together coordinate [4Fe-4S] cluster. [3Fe-4S] cluster is bound by residues C27, C47, and C53. C57 contacts [4Fe-4S] cluster.

Monomer. Requires [4Fe-4S] cluster as cofactor. It depends on [3Fe-4S] cluster as a cofactor. Post-translationally, the N-terminus is blocked.

Ferredoxins are iron-sulfur proteins that transfer electrons in a wide variety of metabolic reactions. In Pyrobaculum islandicum (strain DSM 4184 / JCM 9189 / GEO3), this protein is Ferredoxin.